Consider the following 164-residue polypeptide: MYRIRVFGDPVLRKRAKPVTKFDDNLKKTIERMIETMYHYDGVGLAAPQVGISQRFFVMDVGNGPVAVINPEILEIDPETEVAEEGCLSFPEIFVEIERSKRIKVKYQNTRGEYVEEELEGYAARVFQHEFDHLNGVLIIDRISPAKRLLLRKKLMDIARTVKR.

The Fe cation site is built by cysteine 87 and histidine 129. Glutamate 130 is a catalytic residue. Histidine 133 contacts Fe cation.

The protein belongs to the polypeptide deformylase family. Requires Fe(2+) as cofactor.

The enzyme catalyses N-terminal N-formyl-L-methionyl-[peptide] + H2O = N-terminal L-methionyl-[peptide] + formate. Removes the formyl group from the N-terminal Met of newly synthesized proteins. Requires at least a dipeptide for an efficient rate of reaction. N-terminal L-methionine is a prerequisite for activity but the enzyme has broad specificity at other positions. In Thermotoga sp. (strain RQ2), this protein is Peptide deformylase.